The chain runs to 314 residues: Olfactory receptor 5G9 (314 aa).

Residues 1 to 25 (MADENYTRITEFIFIGLRYHPNLQV) lie on the Extracellular side of the membrane. A glycan (N-linked (GlcNAc...) asparagine) is linked at Asn5. The chain crosses the membrane as a helical span at residues 26-46 (FLFLLFLLFYLVTMTGNLGMI). Over 47–54 (ILIRVDSR) the chain is Cytoplasmic. The chain crosses the membrane as a helical span at residues 55-75 (LHTPMYFFLSHLSFVDICFSS). The Extracellular segment spans residues 76-99 (VVAPKMLTDFFADKKAISFLGCVL). A disulfide bridge connects residues Cys97 and Cys189. Residues 100 to 120 (QQWFFGFFVAIECLLLASMAY) traverse the membrane as a helical segment. The Cytoplasmic portion of the chain corresponds to 121-133 (DRYVAICNPLLYS). Residues 134–154 (VAMSQRLCIQLVIGPYAVGFF) form a helical membrane-spanning segment. The Extracellular portion of the chain corresponds to 155–196 (NTMTHTTAAFRLPFCGSNIINHFFCDMSPILSLICADIRINK). The chain crosses the membrane as a helical span at residues 197 to 217 (LLVFIVAGAVLIVSSTTIIVS). Topologically, residues 218–237 (YFHILIAILRIRSAEGRRKA) are cytoplasmic. Residues 238–258 (FSTCSSHVTAVSILYGTLFFI) traverse the membrane as a helical segment. Residues 259–271 (YVRPSAISSLDLN) are Extracellular-facing. A helical membrane pass occupies residues 272–292 (KVVSVFYTAVIPMLNPLIYSL). The Cytoplasmic segment spans residues 293–314 (RNKEVKSAMGRTVAKAKVFLKN).

Belongs to the G-protein coupled receptor 1 family.

The protein localises to the cell membrane. In terms of biological role, potential odorant receptor. The sequence is that of Olfactory receptor 5G9 from Mus musculus (Mouse).